The sequence spans 93 residues: Small ribosomal subunit protein uS15 (93 aa).

This sequence belongs to the universal ribosomal protein uS15 family. Part of the 30S ribosomal subunit. Forms a bridge to the 50S subunit in the 70S ribosome, contacting the 23S rRNA.

One of the primary rRNA binding proteins, it binds directly to 16S rRNA where it helps nucleate assembly of the platform of the 30S subunit by binding and bridging several RNA helices of the 16S rRNA. Its function is as follows. Forms an intersubunit bridge (bridge B4) with the 23S rRNA of the 50S subunit in the ribosome. The polypeptide is Small ribosomal subunit protein uS15 (Anaplasma phagocytophilum (strain HZ)).